The following is a 319-amino-acid chain: Class I histocompatibility antigen, Non-RT1.A alpha-1 chain (319 aa).

Positions 1-24 are cleaved as a signal peptide; it reads MGAMAPRTLLLLLAAVLAPTQTWA. The alpha-1 stretch occupies residues 25 to 114; sequence GSHSLRYFHT…LLSYYNQSEG (90 aa). The Extracellular portion of the chain corresponds to 25–307; sequence GSHSLRYFHT…WEPSPSTDSN (283 aa). The N-linked (GlcNAc...) asparagine glycan is linked to asparagine 110. An alpha-2 region spans residues 115–206; sequence GSHTIQRMYG…ERGKETLLRS (92 aa). Cystine bridges form between cysteine 125-cysteine 188 and cysteine 227-cysteine 283. The alpha-3 stretch occupies residues 207–298; it reads DPPEAHVTLH…GLPEPLSQRW (92 aa). Residues 209-295 form the Ig-like C1-type domain; that stretch reads PEAHVTLHPR…EHEGLPEPLS (87 aa). The N-linked (GlcNAc...) asparagine glycan is linked to asparagine 280. The tract at residues 299–307 is connecting peptide; that stretch reads EPSPSTDSN. A helical transmembrane segment spans residues 308 to 319; that stretch reads LLLLFLELWQFL.

This sequence belongs to the MHC class I family. As to quaternary structure, heterodimer of an alpha chain and a beta chain (beta-2-microglobulin).

It localises to the membrane. Involved in the presentation of foreign antigens to the immune system. The protein is Class I histocompatibility antigen, Non-RT1.A alpha-1 chain (RT1-Aw2) of Rattus norvegicus (Rat).